Consider the following 324-residue polypeptide: Beta-ketoacyl-[acyl-carrier-protein] synthase III (324 aa).

Residues Cys-116 and His-251 contribute to the active site. The segment at 252 to 256 is ACP-binding; sequence QANLR. Asn-281 is an active-site residue.

The protein belongs to the thiolase-like superfamily. FabH family. In terms of assembly, homodimer.

The protein resides in the cytoplasm. The catalysed reaction is malonyl-[ACP] + acetyl-CoA + H(+) = 3-oxobutanoyl-[ACP] + CO2 + CoA. It participates in lipid metabolism; fatty acid biosynthesis. Catalyzes the condensation reaction of fatty acid synthesis by the addition to an acyl acceptor of two carbons from malonyl-ACP. Catalyzes the first condensation reaction which initiates fatty acid synthesis and may therefore play a role in governing the total rate of fatty acid production. Possesses both acetoacetyl-ACP synthase and acetyl transacylase activities. Its substrate specificity determines the biosynthesis of branched-chain and/or straight-chain of fatty acids. This Xylella fastidiosa (strain 9a5c) protein is Beta-ketoacyl-[acyl-carrier-protein] synthase III.